We begin with the raw amino-acid sequence, 117 residues long: Aspartate 1-decarboxylase (117 aa).

Ser-25 (schiff-base intermediate with substrate; via pyruvic acid) is an active-site residue. Ser-25 carries the pyruvic acid (Ser) modification. Thr-57 serves as a coordination point for substrate. Catalysis depends on Tyr-58, which acts as the Proton donor. 72–74 (GAA) is a substrate binding site.

The protein belongs to the PanD family. In terms of assembly, heterooctamer of four alpha and four beta subunits. Pyruvate serves as cofactor. Post-translationally, is synthesized initially as an inactive proenzyme, which is activated by self-cleavage at a specific serine bond to produce a beta-subunit with a hydroxyl group at its C-terminus and an alpha-subunit with a pyruvoyl group at its N-terminus.

It localises to the cytoplasm. The enzyme catalyses L-aspartate + H(+) = beta-alanine + CO2. Its pathway is cofactor biosynthesis; (R)-pantothenate biosynthesis; beta-alanine from L-aspartate: step 1/1. Functionally, catalyzes the pyruvoyl-dependent decarboxylation of aspartate to produce beta-alanine. The chain is Aspartate 1-decarboxylase from Helicobacter pylori (strain J99 / ATCC 700824) (Campylobacter pylori J99).